A 546-amino-acid chain; its full sequence is uncharacterized protein (546 aa).

Disordered stretches follow at residues 37–101 (KEND…NQKL), 269–300 (QNKA…QPEV), and 392–443 (LSDL…TSAC). 2 stretches are compositionally biased toward basic and acidic residues: residues 81 to 93 (DDVK…ENNQ) and 274 to 283 (ADLRKTESHG). Residues 284 to 298 (THSQSTPPQHSSSQP) are compositionally biased toward low complexity.

This is an uncharacterized protein from Homo sapiens (Human).